Reading from the N-terminus, the 27-residue chain is Metallothionein-like protein CAP5 (27 aa).

The segment covering 1-18 (MAPCSCKSCGTSCAGSCT) has biased composition (low complexity). The interval 1–27 (MAPCSCKSCGTSCAGSCTSCSCGSCSH) is disordered. C4, C6, C9, C13, C20, C22, and C25 together coordinate Cu(+).

The protein belongs to the metallothionein superfamily. Type 8 family.

In Colletotrichum gloeosporioides (Anthracnose fungus), this protein is Metallothionein-like protein CAP5 (CAP5).